The primary structure comprises 258 residues: Caffeoyl-CoA O-methyltransferase 1 (258 aa).

Residues 1-16 show a composition bias toward low complexity; the sequence is MATTATEAAPAQEQQA. The disordered stretch occupies residues 1 to 31; it reads MATTATEAAPAQEQQANGNGEQKTRHSEVGH. Residues 22-31 show a composition bias toward basic and acidic residues; it reads QKTRHSEVGH. Lys-32 contacts substrate. S-adenosyl-L-methionine-binding positions include Thr-74, Glu-96, 98–99, Ser-104, Asp-122, and Ala-151; that span reads GV. Asp-174 contacts substrate. Asp-174 is a binding site for a divalent metal cation. Asp-176 serves as a coordination point for S-adenosyl-L-methionine. Residues Asp-200 and Asn-201 each coordinate a divalent metal cation. Asn-205 contacts substrate.

It belongs to the class I-like SAM-binding methyltransferase superfamily. Cation-dependent O-methyltransferase family. CCoAMT subfamily. It depends on a divalent metal cation as a cofactor.

It catalyses the reaction (E)-caffeoyl-CoA + S-adenosyl-L-methionine = (E)-feruloyl-CoA + S-adenosyl-L-homocysteine + H(+). It functions in the pathway aromatic compound metabolism; phenylpropanoid biosynthesis. Its function is as follows. Methylates caffeoyl-CoA to feruloyl-CoA and 5-hydroxyferuloyl-CoA to sinapoyl-CoA. Plays a role in the synthesis of feruloylated polysaccharides. Involved in the reinforcement of the plant cell wall. Also involved in the responding to wounding or pathogen challenge by the increased formation of cell wall-bound ferulic acid polymers. This Zea mays (Maize) protein is Caffeoyl-CoA O-methyltransferase 1 (CCOAOMT1).